The chain runs to 284 residues: Diaminopimelate epimerase (284 aa).

Asn-20, Gln-53, and Asn-73 together coordinate substrate. Cys-82 acts as the Proton donor in catalysis. Substrate contacts are provided by residues 83 to 84 (GN), Asn-167, Asn-200, and 218 to 219 (ER). Cys-227 functions as the Proton acceptor in the catalytic mechanism. 228–229 (GS) contacts substrate.

The protein belongs to the diaminopimelate epimerase family. Homodimer.

It is found in the cytoplasm. The catalysed reaction is (2S,6S)-2,6-diaminopimelate = meso-2,6-diaminopimelate. The protein operates within amino-acid biosynthesis; L-lysine biosynthesis via DAP pathway; DL-2,6-diaminopimelate from LL-2,6-diaminopimelate: step 1/1. In terms of biological role, catalyzes the stereoinversion of LL-2,6-diaminopimelate (L,L-DAP) to meso-diaminopimelate (meso-DAP), a precursor of L-lysine and an essential component of the bacterial peptidoglycan. The chain is Diaminopimelate epimerase from Xanthomonas axonopodis pv. citri (strain 306).